The chain runs to 59 residues: Small ribosomal subunit protein bS21 (59 aa).

The tract at residues 40-59 (KPSIKKRAKSKAALKYKKQR) is disordered.

Belongs to the bacterial ribosomal protein bS21 family.

In Protochlamydia amoebophila (strain UWE25), this protein is Small ribosomal subunit protein bS21.